Reading from the N-terminus, the 201-residue chain is MPPLTPQRAAVLAFLQEQAQAGVSPSLAEIAQAFGFASRNAAQKHVQALAEAGLIELLPNQKRGIRVPGGAGRDALLNLPVLGRVAAGVPIGADIGLERQLWLDRALFSLRPDYLLQVQGDSMIDDGILDGDLVGVHRSKEARDGQIVVARVDGEITIKRLERGTERIRLLPRNRAHAPIVVAADADFAIEGLYCGLIRQG.

The H-T-H motif DNA-binding region spans 27–47 (LAEIAQAFGFASRNAAQKHVQ). Active-site for autocatalytic cleavage activity residues include serine 122 and lysine 159.

The protein belongs to the peptidase S24 family. Homodimer.

It carries out the reaction Hydrolysis of Ala-|-Gly bond in repressor LexA.. Represses a number of genes involved in the response to DNA damage (SOS response), including recA and lexA. In the presence of single-stranded DNA, RecA interacts with LexA causing an autocatalytic cleavage which disrupts the DNA-binding part of LexA, leading to derepression of the SOS regulon and eventually DNA repair. The sequence is that of LexA repressor 1 from Xanthomonas oryzae pv. oryzae (strain KACC10331 / KXO85).